The following is a 242-amino-acid chain: uncharacterized protein (242 aa).

The HTH gntR-type domain occupies 8–76; sequence TPLYIQLKQI…QGKGTFVKSP (69 aa). Positions 36 to 55 form a DNA-binding region, H-T-H motif; it reads ENELCTKYNVSRITVRKAIL.

This is an uncharacterized protein from Bacillus subtilis (strain 168).